We begin with the raw amino-acid sequence, 140 residues long: Large ribosomal subunit protein uL16 (140 aa).

Residues 1–24 (MALAPARTKYRKSQKGSRAGNAKR) are disordered.

The protein belongs to the universal ribosomal protein uL16 family. As to quaternary structure, part of the 50S ribosomal subunit.

Binds 23S rRNA and is also seen to make contacts with the A and possibly P site tRNAs. This Opitutus terrae (strain DSM 11246 / JCM 15787 / PB90-1) protein is Large ribosomal subunit protein uL16.